Consider the following 77-residue polypeptide: Homeodomain-only protein (77 aa).

Positions 7 to 65 (AALGVRLTEDQVKVLEENFTKVSKHPDETTLMLIAAECGLSEEQTAVWFRMRNAQWRKA) form a DNA-binding region, homeobox; degenerate.

The protein resides in the nucleus. The protein localises to the cytoplasm. Its function is as follows. Atypical homeodomain protein which does not bind DNA and is required to modulate cardiac growth and development. May act via an interaction with SRF, leading to modulate the expression of SRF-dependent cardiac-specific genes and cardiac development. May act as a co-chaperone for HSPA1A and HSPA1B chaperone proteins and assist in chaperone-mediated protein refolding. The protein is Homeodomain-only protein (hopx) of Danio rerio (Zebrafish).